The primary structure comprises 739 residues: NAD(P)H-quinone oxidoreductase subunit 5, chloroplastic (739 aa).

Helical transmembrane passes span 9-29 (WIIP…LLLV), 39-59 (IWAF…ADLA), 89-109 (IDPL…MVLI), 125-145 (FAYM…SNLI), 147-167 (IYIF…FWFT), 185-205 (GDFG…SFEF), 224-244 (LFAA…SAQF), 258-278 (TPIS…FLVA), 280-300 (LLPL…IGII), 327-347 (LGYI…FHLI), 354-374 (ALLF…VGYS), 396-416 (TTFF…CFWS), 425-445 (WLYS…TAFY), 544-564 (LFPM…GIPF), 603-623 (IYSV…YGSV), and 716-736 (ISSY…IYYF).

Belongs to the complex I subunit 5 family. NDH is composed of at least 16 different subunits, 5 of which are encoded in the nucleus.

The protein resides in the plastid. It localises to the chloroplast thylakoid membrane. The enzyme catalyses a plastoquinone + NADH + (n+1) H(+)(in) = a plastoquinol + NAD(+) + n H(+)(out). It carries out the reaction a plastoquinone + NADPH + (n+1) H(+)(in) = a plastoquinol + NADP(+) + n H(+)(out). Functionally, NDH shuttles electrons from NAD(P)H:plastoquinone, via FMN and iron-sulfur (Fe-S) centers, to quinones in the photosynthetic chain and possibly in a chloroplast respiratory chain. The immediate electron acceptor for the enzyme in this species is believed to be plastoquinone. Couples the redox reaction to proton translocation, and thus conserves the redox energy in a proton gradient. This is NAD(P)H-quinone oxidoreductase subunit 5, chloroplastic (ndhF) from Acorus calamus (Sweet flag).